Reading from the N-terminus, the 366-residue chain is Chorismate synthase (366 aa).

Residues arginine 48 and arginine 54 each contribute to the NADP(+) site. FMN-binding positions include 125-127 (RSS), 238-239 (NA), glycine 278, 293-297 (KPTSS), and arginine 319.

It belongs to the chorismate synthase family. Homotetramer. FMNH2 is required as a cofactor.

The enzyme catalyses 5-O-(1-carboxyvinyl)-3-phosphoshikimate = chorismate + phosphate. The protein operates within metabolic intermediate biosynthesis; chorismate biosynthesis; chorismate from D-erythrose 4-phosphate and phosphoenolpyruvate: step 7/7. Functionally, catalyzes the anti-1,4-elimination of the C-3 phosphate and the C-6 proR hydrogen from 5-enolpyruvylshikimate-3-phosphate (EPSP) to yield chorismate, which is the branch point compound that serves as the starting substrate for the three terminal pathways of aromatic amino acid biosynthesis. This reaction introduces a second double bond into the aromatic ring system. The chain is Chorismate synthase from Neisseria gonorrhoeae (strain NCCP11945).